Consider the following 98-residue polypeptide: NADH-ubiquinone oxidoreductase chain 4L (98 aa).

A run of 3 helical transmembrane segments spans residues 1–21, 29–49, and 61–81; these read MSMV…GLLM, SLLC…VAIL, and IILL…LVMV.

This sequence belongs to the complex I subunit 4L family. In terms of assembly, core subunit of respiratory chain NADH dehydrogenase (Complex I) which is composed of 45 different subunits.

The protein localises to the mitochondrion inner membrane. The catalysed reaction is a ubiquinone + NADH + 5 H(+)(in) = a ubiquinol + NAD(+) + 4 H(+)(out). Functionally, core subunit of the mitochondrial membrane respiratory chain NADH dehydrogenase (Complex I) which catalyzes electron transfer from NADH through the respiratory chain, using ubiquinone as an electron acceptor. Part of the enzyme membrane arm which is embedded in the lipid bilayer and involved in proton translocation. This Puma concolor (Mountain lion) protein is NADH-ubiquinone oxidoreductase chain 4L (MT-ND4L).